We begin with the raw amino-acid sequence, 384 residues long: Somatostatin receptor type 4 (384 aa).

The interval 1-34 (MNTPATLPLGGEDTTWTPGINASWAPDEEEDAVR) is disordered. The Extracellular segment spans residues 1–41 (MNTPATLPLGGEDTTWTPGINASWAPDEEEDAVRSDGTGTA). A glycan (N-linked (GlcNAc...) asparagine) is linked at asparagine 21. A helical membrane pass occupies residues 42–69 (GMVTIQCIYALVCLVGLVGNALVIFVIL). The Cytoplasmic segment spans residues 70–79 (RYAKMKTATN). The helical transmembrane segment at 80-105 (IYLLNLAVADELFMLSVPFVASAAAL) threads the bilayer. At 106 to 116 (RHWPFGAVLCR) the chain is on the extracellular side. An intrachain disulfide couples cysteine 115 to cysteine 194. The chain crosses the membrane as a helical span at residues 117 to 138 (AVLSVDGLNMFTSVFCLTVLSV). Residues 139–160 (DRYVAVVHPLRAATYRRPSVAK) lie on the Cytoplasmic side of the membrane. Residues 161 to 181 (LINLGVWLASLLVTLPIAVFA) traverse the membrane as a helical segment. Over 182 to 203 (DTRPARGGEAVACNLHWPHPAW) the chain is Extracellular. The chain crosses the membrane as a helical span at residues 204–228 (SAVFVIYTFLLGFLLPVLAIGLCYL). The Cytoplasmic portion of the chain corresponds to 229-254 (LIVGKMRAVALRAGWQQRRRSEKKIT). A helical transmembrane segment spans residues 255 to 280 (RLVLMVVTVFVLCWMPFYVVQLLNLF). Residues 281 to 287 (VTSLDAT) are Extracellular-facing. Residues 288 to 311 (VNHVSLILSYANSCANPILYGFLS) traverse the membrane as a helical segment. Over 312 to 384 (DNFRRSFQRV…RVPFTKTTTF (73 aa)) the chain is Cytoplasmic. Cysteine 323 carries S-palmitoyl cysteine lipidation.

It belongs to the G-protein coupled receptor 1 family. In terms of tissue distribution, brain, lung, heart and islets. Moderate levels in the hippocampus, cortex and olfactory bulb.

Its subcellular location is the cell membrane. In terms of biological role, receptor for somatostatin-14. The activity of this receptor is mediated by G proteins which inhibits adenylyl cyclase. It is functionally coupled not only to inhibition of adenylate cyclase, but also to activation of both arachidonate release and mitogen-activated protein (MAP) kinase cascade. This is Somatostatin receptor type 4 (Sstr4) from Rattus norvegicus (Rat).